Here is a 158-residue protein sequence, read N- to C-terminus: MNKKFLKCGTLFLISCSILGSTIPAVTVFSDEVTITYNSENNSEKNELYNQLSAEKKGQFDELVSNLNLSEQEQLDLLQQYKEEHPRRAKRGIKSAIIKKVARFLAAKVGQKSVVEITDYLFEWQDNLEAGAENYLVQYGWDRNIAHWTIKTVSFIFL.

The signal sequence occupies residues 1-30 (MNKKFLKCGTLFLISCSILGSTIPAVTVFS).

This is an uncharacterized protein from Streptococcus pneumoniae serotype 2 (strain D39 / NCTC 7466).